The primary structure comprises 256 residues: Pyridoxine 5'-phosphate synthase (256 aa).

Asn-12 contacts 3-amino-2-oxopropyl phosphate. Asp-14 to His-15 contacts 1-deoxy-D-xylulose 5-phosphate. Arg-23 provides a ligand contact to 3-amino-2-oxopropyl phosphate. Residue His-48 is the Proton acceptor of the active site. Positions 50 and 55 each coordinate 1-deoxy-D-xylulose 5-phosphate. Glu-75 functions as the Proton acceptor in the catalytic mechanism. Thr-105 lines the 1-deoxy-D-xylulose 5-phosphate pocket. The active-site Proton donor is the His-199. 3-amino-2-oxopropyl phosphate contacts are provided by residues Gly-200 and Gly-221–Tyr-222.

Belongs to the PNP synthase family. Homooctamer; tetramer of dimers.

The protein localises to the cytoplasm. It catalyses the reaction 3-amino-2-oxopropyl phosphate + 1-deoxy-D-xylulose 5-phosphate = pyridoxine 5'-phosphate + phosphate + 2 H2O + H(+). Its pathway is cofactor biosynthesis; pyridoxine 5'-phosphate biosynthesis; pyridoxine 5'-phosphate from D-erythrose 4-phosphate: step 5/5. Catalyzes the complicated ring closure reaction between the two acyclic compounds 1-deoxy-D-xylulose-5-phosphate (DXP) and 3-amino-2-oxopropyl phosphate (1-amino-acetone-3-phosphate or AAP) to form pyridoxine 5'-phosphate (PNP) and inorganic phosphate. This Bradyrhizobium sp. (strain ORS 278) protein is Pyridoxine 5'-phosphate synthase.